Here is a 361-residue protein sequence, read N- to C-terminus: MGNITADNTSMNCDIDHTIHQTLAPVVYVMVLVVGFPANCLSLYYGYLQIKARNELGVYLCNLTVADLFYICSLPFWLQYVLQHDHWSHDDLSCQVCGILLYENIYISVGFLCCISIDRYLAVAHPFRFHQFRTLKAAMGVSALIWVKELLTSIYFLMHEEVVEDADRHRVCFEHYPLEPRQRGINYYRFLVGFLFPICLLLASYRGILRAVRRSHGTQKSRKDQIQRLVLSTVVIFLACFLPYHVLLLVRSLWESSCDFAKGIFNAYHFSLLLTSFNCVADPVLYCFVSETTHRDLARLRGACLAFLTCARTGRAREAYPLGAPEASGKSEDPEVLTRLHPAFQTPHPPGMGGSPAGGLS.

The Extracellular portion of the chain corresponds to 1 to 12; sequence MGNITADNTSMN. 2 N-linked (GlcNAc...) asparagine glycosylation sites follow: asparagine 3 and asparagine 8. Residues 13–49 form a helical membrane-spanning segment; it reads CDIDHTIHQTLAPVVYVMVLVVGFPANCLSLYYGYLQ. 2 cysteine pairs are disulfide-bonded: cysteine 13–cysteine 258 and cysteine 94–cysteine 172. At 50 to 53 the chain is on the cytoplasmic side; it reads IKAR. The helical transmembrane segment at 54-84 threads the bilayer; sequence NELGVYLCNLTVADLFYICSLPFWLQYVLQH. The Extracellular portion of the chain corresponds to 85 to 89; the sequence is DHWSH. Residues 90 to 125 traverse the membrane as a helical segment; the sequence is DDLSCQVCGILLYENIYISVGFLCCISIDRYLAVAH. Topologically, residues 126 to 133 are cytoplasmic; it reads PFRFHQFR. Residues 134–160 form a helical membrane-spanning segment; sequence TLKAAMGVSALIWVKELLTSIYFLMHE. Residues 161–176 lie on the Extracellular side of the membrane; sequence EVVEDADRHRVCFEHY. The interval 161–176 is extracellular loop 2 (ECL2); it reads EVVEDADRHRVCFEHY. Residues 177–214 form a helical membrane-spanning segment; that stretch reads PLEPRQRGINYYRFLVGFLFPICLLLASYRGILRAVRR. Topologically, residues 215–218 are cytoplasmic; it reads SHGT. A helical transmembrane segment spans residues 219–254; the sequence is QKSRKDQIQRLVLSTVVIFLACFLPYHVLLLVRSLW. Over 255 to 260 the chain is Extracellular; that stretch reads ESSCDF. The helical transmembrane segment at 261-289 threads the bilayer; it reads AKGIFNAYHFSLLLTSFNCVADPVLYCFV. Residues 290-361 are Cytoplasmic-facing; sequence SETTHRDLAR…MGGSPAGGLS (72 aa). Positions 340 to 361 are disordered; that stretch reads LHPAFQTPHPPGMGGSPAGGLS. A compositionally biased stretch (gly residues) spans 351-361; it reads GMGGSPAGGLS.

This sequence belongs to the G-protein coupled receptor 1 family.

Its subcellular location is the cell membrane. Its activity is regulated as follows. Activated by a network of residues that connects an extracellular-facing cavity to Glu-149, a conserved charged residue buried in the transmembrane core of the receptor. Protonation likely drives conformational changes in extracellular loop 2 (ECL2), which stabilizes movement of transmembrane 3 (TM3) and a series of rearrangements that connect the extracellular-facing cavity to Glu-149, a residue only conserved in proton-sensing G-protein coupled receptors. Activated in an allosteric manner by divalent metal ions at the extracellular surface following the order: Cd(2+) &gt; Co(2+) &gt; Ni(2+) &gt; Zn(2+) &gt; Fe(2+) &gt; Ca(2+) &gt; Mg(2+). Functionally, proton-sensing G-protein coupled receptor activated by extracellular pH, which is required to monitor pH changes and generate adaptive reactions. The receptor is almost silent at pH 7.8 but fully activated at pH 6.8. Ligand binding causes a conformation change that triggers signaling via guanine nucleotide-binding proteins (G proteins) and modulates the activity of downstream effectors, such as phospholipase C. GPR68 is mainly coupled to G(q) G proteins and mediates production of diacylglycerol (DAG) and inositol 1,4,5-trisphosphate (IP3). Acts as a key mechanosensor of fluid shear stress and membrane stretch. Expressed in endothelial cells of small-diameter resistance arteries, where it mediates flow-induced dilation in response to shear stress. May represents an osteoblastic pH sensor regulating cell-mediated responses to acidosis in bone. Acts as a regulator of calcium-sensing receptor CASR in a seesaw manner: GPR68-mediated signaling inhibits CASR signaling in response to protons, while CASR inhibits GPR68 in presence of extracellular calcium. This is G-protein coupled receptor 68 (GPR68) from Bos taurus (Bovine).